The chain runs to 328 residues: MAKTSIKLNSGYEMPLVGFGIWKVPVDKTAQAVYDAIKLGYRQIDGAYDYTNSKEAGEGVRRAIEEGIVKREDLFITSKLWNNYHKHEHAIEMAKHEVDTWGIGYLDLFLIHFPISLEYISHSKMPYPCFWPDREKSRSTPLQYTPVAETWAALESLVKTDSNPDGILRSIGVANFRAQLLTDLWGSAKIKPAVNQIEHHPYLVQPQLLAFLKDHGIAITAYSSFGPQSFVELDHPRVSKVEPLFTHPTIKAIADKHGRTGAQVLLRWATQRDIVVIPKSNNVDRLKQNLDCVSFDLSDDEVKQISDLDCGVRFNDPADLSPPIYIFD.

The active-site Proton donor is the Y50. H112 serves as a coordination point for substrate. NAD(+) contacts are provided by residues 174 to 175 (AN), 223 to 232 (SSFGPQSFVE), and 279 to 289 (KSNNVDRLKQN).

The protein belongs to the aldo/keto reductase family.

In terms of biological role, pentose reductase with a broad substrate affinity involved in pentose catabolism. Has highest reductase activities with L-arabinose and D-xylose as substrates, and displays much lower activities with D-ribose, D-galactose and D-glucose. Has highest dehydrogenase activity with L-arabitol as substrate, followed by xylitol and D-sorbitol. May be responsible for the first step of the L-arabinose catabolic pathway. This chain is NAD(P)H-dependent pentose reductase (PRD1), found in Pyricularia oryzae (strain 70-15 / ATCC MYA-4617 / FGSC 8958) (Rice blast fungus).